The chain runs to 122 residues: Large ribosomal subunit protein uL14 (122 aa).

Belongs to the universal ribosomal protein uL14 family. Part of the 50S ribosomal subunit. Forms a cluster with proteins L3 and L19. In the 70S ribosome, L14 and L19 interact and together make contacts with the 16S rRNA in bridges B5 and B8.

Binds to 23S rRNA. Forms part of two intersubunit bridges in the 70S ribosome. The protein is Large ribosomal subunit protein uL14 of Brevibacillus brevis (strain 47 / JCM 6285 / NBRC 100599).